Here is a 232-residue protein sequence, read N- to C-terminus: Acetate--CoA ligase [ADP-forming] I subunit beta (232 aa).

The ATP-grasp domain occupies 27-63 (KEILKLYGIPVPEFKVARNEEEAVKFSGEIGYPVVMK). ATP is bound at residue 53 to 64 (SGEIGYPVVMKI).

It belongs to the acetate CoA ligase beta subunit family. In terms of assembly, heterotetramer of two alpha and two beta subunits.

It is found in the cytoplasm. The enzyme catalyses acetate + ATP + CoA = acetyl-CoA + ADP + phosphate. Activity is dependent on magnesium. Functionally, catalyzes the reversible formation of acetate and ATP from acetyl-CoA by using ADP and phosphate. Can use other substrates such as isobutyryl-CoA, propionyl-CoA and butyryl-CoA, but not indoleacetyl-CoA, phenylacetyl-CoA or succinyl-CoA. Seems to be involved primarily in the conversion of acetyl-CoA to acetate. Participates in the degradation of branched-chain amino acids via branched-chain-acyl-CoA esters. The protein is Acetate--CoA ligase [ADP-forming] I subunit beta of Pyrococcus furiosus (strain ATCC 43587 / DSM 3638 / JCM 8422 / Vc1).